The sequence spans 148 residues: Cysteine proteinase inhibitor 5 (148 aa).

An N-terminal signal peptide occupies residues 1-25; that stretch reads MASKLYYAVAPLVLVLLLLAPLSSA. A Secondary area of contact motif is present at residues 99–103; it reads QVVSG.

Belongs to the cystatin family. Phytocystatin subfamily.

Its subcellular location is the secreted. Its function is as follows. Specific inhibitor of cysteine proteinases. Probably involved in the regulation of endogenous processes and in defense against pests and pathogens. This chain is Cysteine proteinase inhibitor 5, found in Oryza sativa subsp. japonica (Rice).